The primary structure comprises 219 residues: Proteasome subunit beta (219 aa).

Positions 1-14 (MISNSEYHKEYMKG) are cleaved as a propeptide — removed in mature form; by autocatalysis. The Nucleophile role is filled by Thr15.

Belongs to the peptidase T1B family. As to quaternary structure, the 20S proteasome core is composed of 14 alpha and 14 beta subunits that assemble into four stacked heptameric rings, resulting in a barrel-shaped structure. The two inner rings, each composed of seven catalytic beta subunits, are sandwiched by two outer rings, each composed of seven alpha subunits. The catalytic chamber with the active sites is on the inside of the barrel. Has a gated structure, the ends of the cylinder being occluded by the N-termini of the alpha-subunits. Is capped at one or both ends by the proteasome regulatory ATPase, PAN.

The protein localises to the cytoplasm. It carries out the reaction Cleavage of peptide bonds with very broad specificity.. The formation of the proteasomal ATPase PAN-20S proteasome complex, via the docking of the C-termini of PAN into the intersubunit pockets in the alpha-rings, triggers opening of the gate for substrate entry. Interconversion between the open-gate and close-gate conformations leads to a dynamic regulation of the 20S proteasome proteolysis activity. Its function is as follows. Component of the proteasome core, a large protease complex with broad specificity involved in protein degradation. The chain is Proteasome subunit beta from Methanococcus maripaludis (strain C5 / ATCC BAA-1333).